A 927-amino-acid polypeptide reads, in one-letter code: Small conductance calcium-activated potassium channel protein (927 aa).

Over residues 1-31 (MSIQKLNDTTNSGYVSSEETDSLLVSSSNPS) the composition is skewed to polar residues. Disordered regions lie at residues 1-131 (MSIQ…EDVE), 181-251 (LSLK…VKSA), and 296-336 (HLHQ…SSST). Residues 45-62 (SNSTNGPTTGASTSSSGS) are compositionally biased toward low complexity. Gly residues predominate over residues 63–77 (VSGGGGGSGSGGGSA). Composition is skewed to polar residues over residues 95-107 (TSTY…QSQH) and 200-214 (NLGT…SSIP). 2 stretches are compositionally biased toward low complexity: residues 219-232 (SRCR…RRAS) and 296-308 (HLHQ…SQQQ). Polar residues predominate over residues 314-336 (ITSSPTNGSRIIRQSSQPESSST). The chain crosses the membrane as a helical span at residues 489–509 (ALVMGMFGIIVMVIENELSSA). A helical transmembrane segment spans residues 530–550 (TVILLGLIVAYHALEVQLFMI). The chain crosses the membrane as a helical span at residues 569 to 589 (IGLELFICAIHPIPGEYYFQW). Residues 609–629 (VALSLPMFLRLYLICRVMLLH) traverse the membrane as a helical segment. The helical transmembrane segment at 658–678 (LMTICPGTVLLVFMVSLWIIA) threads the bilayer. The pore-forming intramembrane region spans 696–716 (LLNSMWLTAITFLCVGYGDIV). The chain crosses the membrane as a helical span at residues 724-744 (GITLTCGMVGAGCTALLVAVV). The calmodulin-binding stretch occupies residues 763–839 (DTQLTKRLKN…ITDMAKTQNT (77 aa)).

It belongs to the potassium channel KCNN family. SK subfamily. In terms of assembly, heterooligomer. The complex is composed of 4 channel subunits each of which binds to a calmodulin subunit which regulates the channel activity through calcium-binding.

It is found in the membrane. In terms of biological role, forms a voltage-independent potassium channel activated by intracellular calcium. Activation is followed by membrane hyperpolarization. Thought to regulate neuronal excitability by contributing to the slow component of synaptic afterhyperpolarization. The channel is blocked by apamin. This chain is Small conductance calcium-activated potassium channel protein, found in Drosophila melanogaster (Fruit fly).